The primary structure comprises 106 residues: Iron-sulfur cluster assembly protein CyaY (106 aa).

The protein belongs to the frataxin family.

Its function is as follows. Involved in iron-sulfur (Fe-S) cluster assembly. May act as a regulator of Fe-S biogenesis. In Colwellia psychrerythraea (strain 34H / ATCC BAA-681) (Vibrio psychroerythus), this protein is Iron-sulfur cluster assembly protein CyaY.